A 359-amino-acid chain; its full sequence is MADLPAKQTALTFQDDGTLGISHDAPVAELKPDMIIVKTAAVSVNPVDTKMESGFAKAGSIGGCDFAGTVVAVGAAVRRPVKVGDRVTGAVMGSDPNDPSSGSFATYVSAPADITLTLPESVPWAVGTSLSTVWFTVGQALFHHLLPDLAVTPSSPYAGDKPITVLVYGGSTSVGTAAIQLLKLAGLRPVTTCSPRNFDLVKSYGAEEAYDYRSPTCAADIKAATKSNLKYALDCITTKDSIAICYAALGRAGGRYTALDPYWEATAATRKTVKANWTLGITMLGKDIAWPAPYGRPGSEDARAFGAKWAAELQALLESGKMRPHPLRAKEGASWEDVLAGLKEVKEGKVSGEKLVFVF.

3 residues coordinate NADP(+): tyrosine 212, leucine 259, and threonine 278.

It belongs to the zinc-containing alcohol dehydrogenase family. As to quaternary structure, monomer.

It functions in the pathway secondary metabolite biosynthesis. Functionally, trans-enoyl reductase; part of the gene cluster that mediates the biosynthesis of macrophasetins, 3-decalinoyltetramic acids (DTAs) which feature a tetramate (pyrrolidine-2,4-dione) unit connected to a decalin fragment and that have potent bioactivities. The PKS-NRPS mpsA together with its associated enoylreductase partner mpsG incorporate one unit of acetyl-CoA, seven units of malonyl-CoA, and one unit of L-alanine to assemble the linear tetramic acid intermediate corresponding to the backbone of macrophasetins. Without the Diels-Alderase mpsD, the mpsA/G product can undergo the non-enzymatic intramolecular Diels-Alder (IMDA) reaction to generate both macrophasetin A and macrophasetin B. Catalyzed by mpsD, the linear tetramic acid intermediate is thoroughly converted to macrophasetin A via the endo-IMDA reaction in a regioselective and stereoselective manner. Finally, the cytochrome P450 monooxygenase mpsF catalyzes the hydroxylation at C20 to yield the end product macrophasetin C. The sequence is that of Trans-enoyl reductase mpsG from Macrophomina phaseolina (strain MS6) (Charcoal rot fungus).